The sequence spans 226 residues: Transmembrane protein 204 (226 aa).

Residues methionine 1–lysine 5 lie on the Cytoplasmic side of the membrane. The helical transmembrane segment at valine 6–phenylalanine 26 threads the bilayer. Residues threonine 27–asparagine 103 are Extracellular-facing. Residues leucine 104–leucine 124 form a helical membrane-spanning segment. At proline 125 to glutamate 136 the chain is on the cytoplasmic side. A helical membrane pass occupies residues alanine 137 to tyrosine 157. Residues arginine 158–tyrosine 170 are Extracellular-facing. The chain crosses the membrane as a helical span at residues leucine 171–leucine 191. At histidine 192–cysteine 226 the chain is on the cytoplasmic side.

The protein localises to the cell junction. It localises to the adherens junction. Its subcellular location is the cell membrane. Functionally, can influence paracellular permeability. Appears to be involved in cell-cell interactions through adherens. In Bos taurus (Bovine), this protein is Transmembrane protein 204 (TMEM204).